A 427-amino-acid polypeptide reads, in one-letter code: Glutamate-1-semialdehyde 2,1-aminomutase (427 aa).

Residue Lys265 is modified to N6-(pyridoxal phosphate)lysine.

It belongs to the class-III pyridoxal-phosphate-dependent aminotransferase family. HemL subfamily. Homodimer. The cofactor is pyridoxal 5'-phosphate.

It is found in the cytoplasm. It catalyses the reaction (S)-4-amino-5-oxopentanoate = 5-aminolevulinate. Its pathway is porphyrin-containing compound metabolism; protoporphyrin-IX biosynthesis; 5-aminolevulinate from L-glutamyl-tRNA(Glu): step 2/2. This is Glutamate-1-semialdehyde 2,1-aminomutase from Neisseria meningitidis serogroup B (strain ATCC BAA-335 / MC58).